The chain runs to 254 residues: ATP-dependent L-serine kinase SbnI (254 aa).

The active site involves glutamate 20. Serine 33 contacts ADP. Residue isoleucine 57 coordinates O-phospho-L-serine. Residues aspartate 58, glycine 59, histidine 61, and arginine 62 each contribute to the ADP site. O-phospho-L-serine-binding residues include glycine 59 and histidine 61. Tryptophan 98 and arginine 229 together coordinate O-phospho-L-serine.

In terms of assembly, forms dimers and tetramers in solution. Predominantly forms dimers. Dimerization/oligomerization is not essential for kinase activity.

The catalysed reaction is L-serine + ATP = O-phospho-L-serine + ADP + H(+). It participates in siderophore biosynthesis. Binds heme and heme binding inhibits DNA binding. Functionally, free serine kinase that uses ATP to phosphorylate L-serine to yield O-phospho-L-serine and ADP. O-phospho-L-serine serves as a substrate for SbnA and is a precursor for staphyloferrin B biosynthesis. Is also a DNA-binding regulatory protein that senses heme to control gene expression for siderophore biosynthesis. Binds to DNA within the sbnC coding region and is required for expression of genes in the sbn operon from sbnD onward. The sequence is that of ATP-dependent L-serine kinase SbnI from Staphylococcus aureus (strain NCTC 8325 / PS 47).